We begin with the raw amino-acid sequence, 2603 residues long: Protein SABRE (2603 aa).

Residues 1–35 form the signal peptide; sequence MAASPAKFFFGFLIVSIVLWMIFMLFAWMLSRVLG. N-linked (GlcNAc...) asparagine glycosylation is present at Asn-196. Residues 259–287 form a disordered region; the sequence is FPKSKQSSASLRSDEVRTSATAASSAKKP. 10 N-linked (GlcNAc...) asparagine glycosylation sites follow: Asn-331, Asn-486, Asn-597, Asn-807, Asn-867, Asn-887, Asn-1154, Asn-1249, Asn-1280, and Asn-1408. Positions 786 to 814 are disordered; sequence PESGCNKGISSVKDGGPSEKINQSNSVNK. Residues 1416-1436 are disordered; that stretch reads FHQSPSSTEHPTDVGTVYSSQ. N-linked (GlcNAc...) asparagine glycans are attached at residues Asn-1492 and Asn-1659. Disordered regions lie at residues 1656–1676 and 1717–1777; these read EFEN…DDDG and EPPK…DDIG. Residues 1731–1748 show a composition bias toward basic and acidic residues; it reads KIHEENQKESCPETHQGE. Residues 1749-1766 show a composition bias toward polar residues; that stretch reads MSRSSASPGRNLPSSPSH. Residues 1995–2023 adopt a coiled-coil conformation; that stretch reads VEEVELAKINLEEKERERKLLLDDIRKLS. An N-linked (GlcNAc...) asparagine glycan is attached at Asn-2333. 3 disordered regions span residues 2339–2380, 2448–2479, and 2554–2603; these read EQQE…RPRK, GKKF…KPDQ, and IRRH…DFRE. Residues 2343–2380 are compositionally biased toward basic and acidic residues; the sequence is DFSKQKVKEIKPVKSGRSSHEEKKAGKSHEEKKSRPRK. The N-linked (GlcNAc...) asparagine glycan is linked to Asn-2467. Basic residues predominate over residues 2554–2565; the sequence is IRRHTKKFRPRS. A compositionally biased stretch (polar residues) spans 2566–2583; the sequence is QRGSTSQQRESLPSSPIE. Residues 2586–2603 show a composition bias toward low complexity; that stretch reads PFESGYSSGSSPYEDFRE.

This sequence belongs to the SABRE family. As to expression, highest levels in leaves, also expressed in leaves, flowers, and siliques, and, to a lower extent, in roots and stems.

The protein localises to the secreted. It is found in the golgi apparatus. Its function is as follows. May be involved in membrane trafficking. Required for cell expansion, especially in root cortex, probably by counteracting the action of ethylene in promoting cells radial expansion. Involved in female organ development. Antagonistically interacts with ethylene signaling to regulate plant responses to Pi starvation. The polypeptide is Protein SABRE (Arabidopsis thaliana (Mouse-ear cress)).